Consider the following 325-residue polypeptide: RNA ligase 1 (325 aa).

Requires Mg(2+) as cofactor. Mn(2+) serves as cofactor. In terms of processing, AMPylates itself (auto-AMPylation).

The enzyme catalyses ATP + (ribonucleotide)n-3'-hydroxyl + 5'-phospho-(ribonucleotide)m = (ribonucleotide)n+m + AMP + diphosphate.. Functions as an RNA ligase, in vitro. The ligation reaction entails three nucleotidyl transfer steps. In the first step, the RNA ligase reacts with ATP in the absence of nucleic acid to form a covalent ligase-AMP intermediate and release pyrophosphate. In step 2, the ligase-AMP binds to the nucleic acid and transfers the adenylate to the 5'-PO4 terminus to form an adenylylated intermediate. In step 3, the RNA ligase directs the attack of the 3'-OH on the 5'-phosphoanhydride linkage, resulting in a repaired 3'-5' phosphodiester and release of AMP. Exhibits selectivity for single-stranded RNA substrates and may not have nick-sealing activity on double-stranded DNA-RNA hybrids. May play a role in maintaining RNA integrity under stress conditions, for example in response to reactive oxygen species (ROS). In Danio rerio (Zebrafish), this protein is RNA ligase 1.